The following is a 463-amino-acid chain: MGKEKTHINIVVIGHVDSGKSTTTGHLIYKCGGIDKRTIEKFEKEAQEMGKGSFKYAWVLDKLKAERERGITIDIALWKFETSKYYVTIIDAPGHRDFIKNMITGTSQADCAVLIVAAGTGEFEAGISKNGQTREHALLAFTLGVKQLIVGVNKMDSTEPPYSEPRFEEIKKEVSSYIKKIGYNPAAVAFVPISGWHGDNMLEPSTKMPWFKGWQVERKEGKADGKSLIEALDAILPPARPTDKPLRLPLQDVYKIGGIGTVPVGRVETGVLKPGTIVVFAPANITTEVKSVEMHHEALQEAVPGDNVGFNVKNVSVKELRRGYVAGDSKNNPPKGAADFTAQVIVLNHPGQISNGYTPVLDCHTAHIACKFAEIKEKVDRRTGKSTEVNPKSIKSGDAAIVNLVPSKPLCVESFQEFPPLGRFAVRDMRQTVAVGVIKAVNFKEAGGGKVTKAAEKATKGKK.

The 238-residue stretch at 5–242 folds into the tr-type G domain; sequence KTHINIVVIG…DAILPPARPT (238 aa). The segment at 14–21 is G1; sequence GHVDSGKS. Residue 14-21 participates in GTP binding; sequence GHVDSGKS. The tract at residues 70–74 is G2; the sequence is GITID. Positions 91–94 are G3; sequence DAPG. GTP-binding positions include 91–95 and 153–156; these read DAPGH and NKMD. Residues 153–156 are G4; it reads NKMD. Residues 194–196 form a G5 region; sequence SGW. 5-glutamyl glycerylphosphorylethanolamine is present on residues Glu301 and Glu374.

The protein belongs to the TRAFAC class translation factor GTPase superfamily. Classic translation factor GTPase family. EF-Tu/EF-1A subfamily.

The protein localises to the cytoplasm. In terms of biological role, this protein promotes the GTP-dependent binding of aminoacyl-tRNA to the A-site of ribosomes during protein biosynthesis. This chain is Elongation factor 1-alpha, found in Bombyx mori (Silk moth).